Consider the following 568-residue polypeptide: 2-isopropylmalate synthase (568 aa).

A Pyruvate carboxyltransferase domain is found at Pro-37–Asp-313. Positions 46, 252, 254, and 288 each coordinate Mg(2+). The interval Glu-455–Ser-568 is regulatory domain.

The protein belongs to the alpha-IPM synthase/homocitrate synthase family. LeuA type 2 subfamily. In terms of assembly, homodimer. The cofactor is Mg(2+).

Its subcellular location is the cytoplasm. The catalysed reaction is 3-methyl-2-oxobutanoate + acetyl-CoA + H2O = (2S)-2-isopropylmalate + CoA + H(+). It functions in the pathway amino-acid biosynthesis; L-leucine biosynthesis; L-leucine from 3-methyl-2-oxobutanoate: step 1/4. Catalyzes the condensation of the acetyl group of acetyl-CoA with 3-methyl-2-oxobutanoate (2-ketoisovalerate) to form 3-carboxy-3-hydroxy-4-methylpentanoate (2-isopropylmalate). This is 2-isopropylmalate synthase from Thermobifida fusca (strain YX).